We begin with the raw amino-acid sequence, 609 residues long: Cationic amino acid transporter 3, mitochondrial (609 aa).

The transit peptide at 1–14 (MGCLRSLVRRKQFD) directs the protein to the mitochondrion. 14 consecutive transmembrane segments (helical) span residues 38–58 (LIAI…VGTV), 66–86 (ALAL…FCYA), 104–124 (ICIG…EYTI), 161–181 (IVVD…CCLG), 190–210 (GIVT…GSYL), 226–246 (FPYG…AYIG), 270–290 (ISLL…VGLV), 314–334 (AYLI…GSIL), 361–381 (QVPI…AFFM), 388–408 (GMVS…LLIV), 474–494 (IMFT…FLLP), 499–519 (YSLC…LICI), 534–554 (FICP…MYLL), and 558–578 (GAAT…VYIF).

This sequence belongs to the amino acid-polyamine-organocation (APC) superfamily. Cationic amino acid transporter (CAT) (TC 2.A.3.3) family. Expressed in roots, stems, flowers, and leaves.

It is found in the mitochondrion membrane. In terms of biological role, permease involved in the transport of the cationic neutral or acidic amino acids. The polypeptide is Cationic amino acid transporter 3, mitochondrial (CAT3) (Arabidopsis thaliana (Mouse-ear cress)).